We begin with the raw amino-acid sequence, 122 residues long: Proline-rich protein 15 (122 aa).

Residues 1-122 (MADSGGSSPW…FPDDPQEDKQ (122 aa)) are disordered. Ser-39 is subject to Phosphoserine. Polar residues predominate over residues 46-56 (TSSLPENQHSN). Residues 63 to 76 (ESLRSDKLCEEKTG) show a composition bias toward basic and acidic residues. The span at 80 to 97 (RNLKISRSGRFKEKRKMR) shows a compositional bias: basic residues. Positions 110–122 (EADFPDDPQEDKQ) are enriched in acidic residues.

It belongs to the PRR15 family. Exhibits a cell type specific expression pattern only in the small and large intestine and in the testis. Along the intestinal tract expression is restricted to the non-proliferating epithelial cells surrounding the villi and no expression is found in the intestinal crypts, where proliferation occurs. In the testis, it is detected only in post-mitotic secondary spermatocytes.

In terms of biological role, may have a role in proliferation and/or differentiation. The chain is Proline-rich protein 15 (Prr15) from Mus musculus (Mouse).